A 109-amino-acid chain; its full sequence is Larval cuticle protein 1 (109 aa).

The first 14 residues, 1–14 (MILVALALVALAVA), serve as a signal peptide directing secretion. Residues 34 to 107 (EGSYQFGFET…AEGSSIPKPA (74 aa)) form the Chitin-binding type R&amp;R domain.

Its function is as follows. Component of the cuticle of the larva of Helicoverpa armigera. The sequence is that of Larval cuticle protein 1 (LCP1) from Helicoverpa armigera (Cotton bollworm).